Reading from the N-terminus, the 341-residue chain is L-threonine 3-dehydrogenase (341 aa).

Cys-38 provides a ligand contact to Zn(2+). Residues Thr-40 and His-43 each act as charge relay system in the active site. Positions 63, 64, 93, 96, 99, and 107 each coordinate Zn(2+). NAD(+) is bound by residues Ile-175, Asp-195, Arg-200, 262–264 (LGI), and 286–287 (IY).

This sequence belongs to the zinc-containing alcohol dehydrogenase family. Homotetramer. Zn(2+) is required as a cofactor.

It is found in the cytoplasm. The catalysed reaction is L-threonine + NAD(+) = (2S)-2-amino-3-oxobutanoate + NADH + H(+). It participates in amino-acid degradation; L-threonine degradation via oxydo-reductase pathway; glycine from L-threonine: step 1/2. In terms of biological role, catalyzes the NAD(+)-dependent oxidation of L-threonine to 2-amino-3-ketobutyrate. This Shewanella pealeana (strain ATCC 700345 / ANG-SQ1) protein is L-threonine 3-dehydrogenase.